Reading from the N-terminus, the 438-residue chain is POU domain, class 3, transcription factor 3-A (438 aa).

Disordered regions lie at residues 22-43 (VHSE…SVSG), 102-172 (SPWS…QSQQ), and 186-248 (GMLN…PTSD). Composition is skewed to polar residues over residues 103–123 (PWSS…VKSS) and 146–159 (QSHQ…TASH). Residues 160–172 (ISTITGGQQQSQQ) are compositionally biased toward low complexity. Positions 210 to 230 (HHHHHHHQQQHPHHHHHHQHH) are enriched in basic residues. In terms of domain architecture, POU-specific spans 242–316 (EDTPTSDDLE…LLNKWLEEAD (75 aa)). The homeobox DNA-binding region spans 334–393 (KRKKRTSIEVSVKGALESHFLKCPKPSAQEITSLADNLQLEKEVVRVWFCNRRQKEKRMT).

The protein belongs to the POU transcription factor family. Class-3 subfamily. In terms of tissue distribution, predominantly expressed in the embryonic and adult central nervous system. In adults, isoform 2 is expressed in the brain, ovary, basal cells of the skin and muscle satellite cells.

It localises to the nucleus. In terms of biological role, transcription factor that may play important roles in patterning the embryonic brain. The sequence is that of POU domain, class 3, transcription factor 3-A (pou3f3a) from Danio rerio (Zebrafish).